The following is a 182-amino-acid chain: Large ribosomal subunit protein uL6 (182 aa).

The protein belongs to the universal ribosomal protein uL6 family. As to quaternary structure, part of the 50S ribosomal subunit.

This protein binds to the 23S rRNA, and is important in its secondary structure. It is located near the subunit interface in the base of the L7/L12 stalk, and near the tRNA binding site of the peptidyltransferase center. The polypeptide is Large ribosomal subunit protein uL6 (Trichormus variabilis (strain ATCC 29413 / PCC 7937) (Anabaena variabilis)).